A 556-amino-acid polypeptide reads, in one-letter code: Phenylalanine--tRNA ligase beta subunit (556 aa).

The 77-residue stretch at 278 to 354 folds into the B5 domain; the sequence is LTPKEFEVSF…IAYGYNNIDP (77 aa). Positions 332, 338, 341, and 342 each coordinate Mg(2+).

It belongs to the phenylalanyl-tRNA synthetase beta subunit family. Type 2 subfamily. As to quaternary structure, tetramer of two alpha and two beta subunits. It depends on Mg(2+) as a cofactor.

The protein localises to the cytoplasm. The enzyme catalyses tRNA(Phe) + L-phenylalanine + ATP = L-phenylalanyl-tRNA(Phe) + AMP + diphosphate + H(+). The polypeptide is Phenylalanine--tRNA ligase beta subunit (Pyrococcus furiosus (strain ATCC 43587 / DSM 3638 / JCM 8422 / Vc1)).